The chain runs to 292 residues: Expansin-B11 (292 aa).

Residues 1–27 form the signal peptide; that stretch reads MAKSCTLVLLLVALVGLSLLVSPIACS. Asparagine 51 carries N-linked (GlcNAc...) asparagine glycosylation. The region spanning 82–192 is the Expansin-like EG45 domain; that stretch reads GGACGYQTAV…RRVPCKYSGV (111 aa). 3 disulfides stabilise this stretch: cysteine 85–cysteine 114, cysteine 117–cysteine 187, and cysteine 122–cysteine 128. The region spanning 205–287 is the Expansin-like CBD domain; sequence FYFEVLIEFE…SWKPGVTYRS (83 aa).

This sequence belongs to the expansin family. Expansin B subfamily. Expressed in internodes.

The protein localises to the secreted. It localises to the cell wall. It is found in the membrane. May cause loosening and extension of plant cell walls by disrupting non-covalent bonding between cellulose microfibrils and matrix glucans. No enzymatic activity has been found. May be required for rapid internodal elongation in deepwater rice during submergence. In Oryza sativa subsp. japonica (Rice), this protein is Expansin-B11 (EXPB11).